The primary structure comprises 206 residues: RNA-free ribonuclease P (206 aa).

The tract at residues 187-206 (NLAGDDPGHAPPCGPDQPAG) is disordered. Over residues 195 to 206 (HAPPCGPDQPAG) the composition is skewed to pro residues.

It belongs to the HARP family.

It carries out the reaction Endonucleolytic cleavage of RNA, removing 5'-extranucleotides from tRNA precursor.. RNA-free RNase P that catalyzes the removal of the 5'-leader sequence from pre-tRNA to produce the mature 5'-terminus. The protein is RNA-free ribonuclease P of Halorhodospira halophila (strain DSM 244 / SL1) (Ectothiorhodospira halophila (strain DSM 244 / SL1)).